The sequence spans 459 residues: Alcohol acyl transferase 2 (459 aa).

Residues His-164 and Asn-385 each act as proton acceptor in the active site.

It belongs to the plant acyltransferase family. In terms of tissue distribution, highly expressed in the cortex and skin of ripe fruit.

Functionally, involved in the biosynthesis of volatile esters which confer ripe apple fruit flavor. Alcohol acyl transferase that can use a wide range of alcohols as substrate to produce esters. The protein is Alcohol acyl transferase 2 of Malus domestica (Apple).